The following is a 933-amino-acid chain: Bromodomain testis-specific protein (933 aa).

The tract at residues 1-21 is disordered; sequence MSMSSRHLHSSIVNPPPPEYI. The Bromo 1 domain maps to 28 to 134; the sequence is RLTNQLQYLE…KVFMEKIAEM (107 aa). Positions 214 to 225 match the Nuclear localization signal motif; the sequence is KGIKRKADTTTP. The disordered stretch occupies residues 235–263; that stretch reads ESSPTLSEPKPNKILSGTEKTRSAETSAV. The region spanning 278–385 is the Bromo 2 domain; the sequence is NQICEQLKHC…DVFEGMFAKI (108 aa). 3 disordered regions span residues 398–425, 576–610, and 627–662; these read RYKT…DERA, KPSS…QLSS, and GGPS…ESAT. The span at 404 to 418 shows a compositional bias: low complexity; it reads EESSSSSSSEQSSSS. Residues 423 to 448 adopt a coiled-coil conformation; it reads ERAQHLALLQEQLRAVQEQLKALTET. The 83-residue stretch at 495–577 folds into the NET domain; the sequence is VSDEEEDVKP…VCLRKRPKKP (83 aa). The segment covering 584 to 603 has biased composition (basic and acidic residues); sequence KSKEQLNKEKKQELEKRLRD. Residues 630-660 are compositionally biased toward low complexity; the sequence is SRLSESSTSSSASDVSNSSDSSSSDSSDSES. A coiled-coil region spans residues 829–917; sequence AKEERERALK…RREAMAGTID (89 aa).

This sequence belongs to the BET family.

Its subcellular location is the nucleus. Testis-specific chromatin protein that specifically binds histone H4 acetylated at 'Lys-5' and 'Lys-8' (H4K5ac and H4K8ac, respectively) and plays a key role in spermatogenesis. Required in late pachytene spermatocytes: plays a role in meiotic and post-meiotic cells by binding to acetylated histones at the promoter of specific meiotic and post-meiotic genes, facilitating their activation at the appropriate time. In the post-meiotic phase of spermatogenesis, binds to hyperacetylated histones and participates in their general removal from DNA. Also recognizes and binds a subset of butyrylated histones: able to bind histone H4 butyrylated at 'Lys-8' (H4K8ac), while it is not able to bind H4 butyrylated at 'Lys-5' (H4K5ac). The chain is Bromodomain testis-specific protein (brdt) from Xenopus tropicalis (Western clawed frog).